Here is a 2116-residue protein sequence, read N- to C-terminus: Unconventional myosin-VIIb (2116 aa).

The region spanning 65–760 (QGVDDMIRLG…QDTLLEVQRS (696 aa)) is the Myosin motor domain. Residue 158–165 (GESGAGKT) participates in ATP binding. Residues 637–659 (LDQLMKILTNCQPYFIRCIKPNE) form an actin-binding region. IQ domains follow at residues 745-765 (IFLR…VLDR), 763-792 (LDRA…AAVT), 786-815 (QRRA…GFER), 814-834 (ERLQ…AMRQ), 832-861 (MRQR…AVVV), and 855-884 (KRRA…NAPL). Ser904 bears the Phosphoserine mark. The tract at residues 916–1542 (EKVFGFLPAM…KKQGLLASEN (627 aa)) is mediates interaction with ANKS4B. Residues 989 to 1192 (HIRRPLRYPL…PTWLELQAVK (204 aa)) form the MyTH4 1 domain. The FERM 1 domain occupies 1197 to 1506 (IPIQVILATG…EGLKERSIFA (310 aa)). Ser1371 is subject to Phosphoserine. The region spanning 1501–1567 (ERSIFAMALQ…PMACLYTIPT (67 aa)) is the SH3 domain. The mediates interaction with CDHR2, CDHR5 and USH1C stretch occupies residues 1501–2116 (ERSIFAMALQ…GSKAPALAST (616 aa)). 2 MyTH4 domains span residues 1644–1793 (YSCE…EAAE) and 1790–1896 (EAAE…KLWL). Position 1645 is a phosphoserine (Ser1645). Residues 1799–2102 (ICHKIYFPND…SYVQQLLSAM (304 aa)) enclose the FERM 2 domain.

This sequence belongs to the TRAFAC class myosin-kinesin ATPase superfamily. Myosin family. Part of the IMAC/intermicrovillar adhesion complex/intermicrovillar tip-link complex composed of ANKS4B, MYO7B, USH1C, CDHR2 and CDHR5. Interacts with CDHR2. Interacts with CDHR5. Interacts with USH1C. Interacts with ANKS4B; requires initial interaction with USH1C. Interacts with CALML4; the interaction mediates the association of CALML4 with the IMAC/intermicrovillar adhesion complex.

Its subcellular location is the cytoplasm. It localises to the cytoskeleton. It is found in the cell projection. The protein resides in the microvillus. Myosins are actin-based motor molecules with ATPase activity. Their highly divergent tails are presumed to bind to membranous compartments, which would be moved relative to actin filaments. As part of the intermicrovillar adhesion complex/IMAC plays a role in epithelial brush border differentiation, controlling microvilli organization and length. May link the complex to the actin core bundle of microvilli. In Homo sapiens (Human), this protein is Unconventional myosin-VIIb.